We begin with the raw amino-acid sequence, 239 residues long: 7-cyano-7-deazaguanine synthase (239 aa).

F16–L26 provides a ligand contact to ATP. Zn(2+)-binding residues include C204, C219, C222, and C225.

Belongs to the QueC family. Requires Zn(2+) as cofactor.

It carries out the reaction 7-carboxy-7-deazaguanine + NH4(+) + ATP = 7-cyano-7-deazaguanine + ADP + phosphate + H2O + H(+). It participates in purine metabolism; 7-cyano-7-deazaguanine biosynthesis. Catalyzes the ATP-dependent conversion of 7-carboxy-7-deazaguanine (CDG) to 7-cyano-7-deazaguanine (preQ(0)). The polypeptide is 7-cyano-7-deazaguanine synthase (Polaromonas naphthalenivorans (strain CJ2)).